Here is a 271-residue protein sequence, read N- to C-terminus: DNA-directed RNA polymerase subunit Rpo3 (271 aa).

It belongs to the archaeal Rpo3/eukaryotic RPB3 RNA polymerase subunit family. Part of the RNA polymerase complex.

Its subcellular location is the cytoplasm. The catalysed reaction is RNA(n) + a ribonucleoside 5'-triphosphate = RNA(n+1) + diphosphate. In terms of biological role, DNA-dependent RNA polymerase (RNAP) catalyzes the transcription of DNA into RNA using the four ribonucleoside triphosphates as substrates. This is DNA-directed RNA polymerase subunit Rpo3 from Thermoplasma volcanium (strain ATCC 51530 / DSM 4299 / JCM 9571 / NBRC 15438 / GSS1).